We begin with the raw amino-acid sequence, 257 residues long: uncharacterized protein (257 aa).

Catalysis depends on charge relay system residues serine 122 and histidine 236.

The protein belongs to the peptidase S9B family.

This is an uncharacterized protein from Bacillus subtilis (strain 168).